Here is a 299-residue protein sequence, read N- to C-terminus: Endonuclease 4 (299 aa).

The signal sequence occupies residues 1-24; the sequence is MSSSLRQWFARVLVLTQLINGALC. The a divalent metal cation site is built by Trp25 and His30. 25–30 provides a ligand contact to substrate; that stretch reads WGKEGH. Cys34 and Cys65 are joined by a disulfide. 2 residues coordinate a divalent metal cation: Asp69 and His84. Substrate is bound by residues 69 to 75, 84 to 87, and 94 to 99; these read DEIKHHW, HYVD, and NYEYCR. Intrachain disulfides connect Cys93/Cys246, Cys101/Cys111, and Cys226/Cys233. The substrate site is built by Asn118 and Tyr136. A glycan (N-linked (GlcNAc...) asparagine) is linked at Asn118. N-linked (GlcNAc...) asparagine glycosylation is present at Asn137. A divalent metal cation contacts are provided by His147, Asp151, His157, His181, and Asp185. Residues 147 to 196 are substrate binding; the sequence is HFIGDIHQPLHVGFLGDEGGNTITVRWYRRKTNLHHVWDNMIIESALKTY. Asn198, Asn211, and Asn229 each carry an N-linked (GlcNAc...) asparagine glycan. Positions 284-299 are cleaved as a propeptide — removed in mature form; sequence ATLNRIFSSKPKHAGS.

Belongs to the nuclease type I family. In terms of assembly, monomer. Requires Mn(2+) as cofactor. Ca(2+) serves as cofactor.

It carries out the reaction Endonucleolytic cleavage to 5'-phosphomononucleotide and 5'-phosphooligonucleotide end-products.. Endonuclease that can use single-stranded RNA and DNA as substrates. In contradiction with PubMed:23620482, cannot hydrolyze single-stranded DNA and does not cleave mismatches. This is Endonuclease 4 from Arabidopsis thaliana (Mouse-ear cress).